Consider the following 161-residue polypeptide: Cap-associated protein CAF20 (161 aa).

Over residues 52–72 (HFGRRRSSHHHGRPKIKHNKP) the composition is skewed to basic residues. The tract at residues 52-108 (HFGRRRSSHHHGRPKIKHNKPKVTTDSDGWCTFEAKKKGSGEDDEEETETTPTSTVP) is disordered. Ser78 and Ser91 each carry phosphoserine. Phosphothreonine is present on residues Thr99, Thr101, and Thr102. Ser154 carries the phosphoserine modification.

This sequence belongs to the CAF20 family. As to quaternary structure, interacts with TIF45. Post-translationally, phosphorylated by casein kinase II complex (CK2).

The protein resides in the cytoplasm. In terms of biological role, acts as an inhibitor of cap-dependent translation. Competes with eIF4G1/TIF4631 and EAP1 for binding to eIF4E/TIF45 and interferes with the formation of the eIF4F complex, inhibiting translation and stabilizing mRNA. Binding affinity for eIF4E/TIF45 is 10-fold less than that of eIF4G1/TIF4631. Required for induction of pseudohyphal growth in response to nitrogen limitation, probably by regulating STE12 translation. This Saccharomyces cerevisiae (strain ATCC 204508 / S288c) (Baker's yeast) protein is Cap-associated protein CAF20 (CAF20).